A 175-amino-acid polypeptide reads, in one-letter code: uncharacterized protein (175 aa).

This sequence belongs to the asfivirus B175L family.

This is an uncharacterized protein from Ornithodoros (relapsing fever ticks).